The primary structure comprises 1094 residues: Centrosomal protein of 128 kDa (1094 aa).

The interval 1–29 (MAESSSESDHFRCRDRLSPWAARSTHRGT) is disordered. Residues 7-17 (ESDHFRCRDRL) are compositionally biased toward basic and acidic residues. The residue at position 31 (S31) is a Phosphoserine. The tract at residues 115–140 (DGGTGSELHHFPPTSPLKDYGDPQGI) is disordered. Coiled coils occupy residues 190 to 827 (SRSD…QESI) and 879 to 959 (EELK…IALE). Residues S249, S291, and S331 each carry the phosphoserine modification. Residues 319–345 (AEGDRKGLQHQVSQISKQQSNYQDEQG) form a disordered region. Residues 328-342 (HQVSQISKQQSNYQD) are compositionally biased toward polar residues. A compositionally biased stretch (basic and acidic residues) spans 987 to 999 (DSCSSSERTDGRY). The tract at residues 987-1018 (DSCSSSERTDGRYSKYRVRRNSLQHHQDDTKY) is disordered. Residues 1000–1009 (SKYRVRRNSL) are compositionally biased toward basic residues. S1061 bears the Phosphoserine mark. A disordered region spans residues 1067 to 1094 (VAPDSASNKEDATMNGTSSQPKKEEYGS).

Its subcellular location is the cytoplasm. It is found in the cytoskeleton. The protein localises to the microtubule organizing center. It localises to the centrosome. The protein resides in the centriole. Its subcellular location is the spindle pole. This is Centrosomal protein of 128 kDa (CEP128) from Homo sapiens (Human).